The primary structure comprises 315 residues: Adenine deaminase (315 aa).

Residues histidine 14, histidine 16, and histidine 194 each coordinate Zn(2+). Catalysis depends on glutamate 197, which acts as the Proton donor. Aspartate 275 contributes to the Zn(2+) binding site. Aspartate 276 lines the substrate pocket.

The protein belongs to the metallo-dependent hydrolases superfamily. Adenosine and AMP deaminases family. Adenine deaminase type 2 subfamily. Requires Zn(2+) as cofactor.

The catalysed reaction is adenine + H2O + H(+) = hypoxanthine + NH4(+). Its function is as follows. Catalyzes the hydrolytic deamination of adenine to hypoxanthine. Plays an important role in the purine salvage pathway and in nitrogen catabolism. This chain is Adenine deaminase, found in Pseudomonas putida (strain ATCC 47054 / DSM 6125 / CFBP 8728 / NCIMB 11950 / KT2440).